The chain runs to 246 residues: 4-hydroxy-tetrahydrodipicolinate reductase (246 aa).

Glycine 9–methionine 14 is a binding site for NAD(+). Arginine 36 serves as a coordination point for NADP(+). Residues glycine 78–threonine 80 and serine 104–methionine 107 each bind NAD(+). Residue histidine 137 is the Proton donor/acceptor of the active site. Histidine 138 provides a ligand contact to (S)-2,3,4,5-tetrahydrodipicolinate. Lysine 141 (proton donor) is an active-site residue. Glycine 147–threonine 148 provides a ligand contact to (S)-2,3,4,5-tetrahydrodipicolinate.

It belongs to the DapB family.

The protein resides in the cytoplasm. The enzyme catalyses (S)-2,3,4,5-tetrahydrodipicolinate + NAD(+) + H2O = (2S,4S)-4-hydroxy-2,3,4,5-tetrahydrodipicolinate + NADH + H(+). It catalyses the reaction (S)-2,3,4,5-tetrahydrodipicolinate + NADP(+) + H2O = (2S,4S)-4-hydroxy-2,3,4,5-tetrahydrodipicolinate + NADPH + H(+). It functions in the pathway amino-acid biosynthesis; L-lysine biosynthesis via DAP pathway; (S)-tetrahydrodipicolinate from L-aspartate: step 4/4. Its function is as follows. Catalyzes the conversion of 4-hydroxy-tetrahydrodipicolinate (HTPA) to tetrahydrodipicolinate. The sequence is that of 4-hydroxy-tetrahydrodipicolinate reductase from Chlamydia muridarum (strain MoPn / Nigg).